Here is a 26-residue protein sequence, read N- to C-terminus: uncharacterized protein (26 aa).

It localises to the plastid. The protein localises to the chloroplast. This is an uncharacterized protein from Trieres chinensis (Marine centric diatom).